The following is a 372-amino-acid chain: Delta-type opioid receptor (372 aa).

The Extracellular segment spans residues 1–47 (MEPVPSARAELQFSLLANVSDTFPSAFPSASANASGSPGARSASSLA). Residues N18 and N33 are each glycosylated (N-linked (GlcNAc...) asparagine). The chain crosses the membrane as a helical span at residues 48–75 (LAIAITALYSAVCAVGLLGNVLVMFGIV). The Cytoplasmic segment spans residues 76–85 (RYTKLKTATN). Residues 86–110 (IYIFNLALADALATSTLPFQSAKYL) form a helical membrane-spanning segment. The Extracellular segment spans residues 111 to 122 (METWPFGELLCK). A disulfide bridge connects residues C121 and C198. A helical transmembrane segment spans residues 123–144 (AVLSIDYYNMFTSIFTLTMMSV). The Cytoplasmic portion of the chain corresponds to 145-163 (DRYIAVCHPVKALDFRTPA). The helical transmembrane segment at 164–186 (KAKLINICIWVLASGVGVPIMVM) threads the bilayer. Residues 187–206 (AVTQPRDGAVVCTLQFPSPS) lie on the Extracellular side of the membrane. A helical membrane pass occupies residues 207 to 238 (WYWDTVTKICVFLFAFVVPILIITVCYGLMLL). Residues 239 to 261 (RLRSVRLLSGSKEKDRSLRRITR) are Cytoplasmic-facing. Residues 262 to 284 (MVLVVVGAFVVCWAPIHIFVIVW) form a helical membrane-spanning segment. Residues 285–299 (TLVDINRRDPLVVAA) lie on the Extracellular side of the membrane. Residues 300–321 (LHLCIALGYANSSLNPVLYAFL) form a helical membrane-spanning segment. Residues 322–372 (DENFKRCFRQLCRAPCGGQEPGSLRRPRQATARERVTACTPSDGPGGGAAA) are Cytoplasmic-facing. C333 carries the S-palmitoyl cysteine lipid modification. The segment at 340–372 (QEPGSLRRPRQATARERVTACTPSDGPGGGAAA) is disordered.

Belongs to the G-protein coupled receptor 1 family. May form homooligomers. Forms a heterodimer with OPRM1. Interacts with GPRASP1. Interacts with RTP4; the interaction promotes cell surface localization of the OPRD1-OPRM1 heterodimer. Ubiquitinated. A basal ubiquitination seems not to be related to degradation. Ubiquitination is increased upon formation of OPRM1:OPRD1 oligomers leading to proteasomal degradation; the ubiquitination is diminished by RTP4. As to expression, detected in brain, brain stem and brain cortex.

It is found in the cell membrane. Functionally, G-protein coupled receptor that functions as a receptor for endogenous enkephalins and for a subset of other opioids. Ligand binding causes a conformation change that triggers signaling via guanine nucleotide-binding proteins (G proteins) and modulates the activity of down-stream effectors, such as adenylate cyclase. Signaling leads to the inhibition of adenylate cyclase activity. Inhibits neurotransmitter release by reducing calcium ion currents and increasing potassium ion conductance. Plays a role in the perception of pain and in opiate-mediated analgesia. Plays a role in developing analgesic tolerance to morphine. The sequence is that of Delta-type opioid receptor (Oprd1) from Rattus norvegicus (Rat).